Here is a 201-residue protein sequence, read N- to C-terminus: FMN-dependent NADH:quinone oxidoreductase (201 aa).

92–95 (MWNL) provides a ligand contact to FMN.

This sequence belongs to the azoreductase type 1 family. Homodimer. The cofactor is FMN.

It catalyses the reaction 2 a quinone + NADH + H(+) = 2 a 1,4-benzosemiquinone + NAD(+). The enzyme catalyses N,N-dimethyl-1,4-phenylenediamine + anthranilate + 2 NAD(+) = 2-(4-dimethylaminophenyl)diazenylbenzoate + 2 NADH + 2 H(+). Quinone reductase that provides resistance to thiol-specific stress caused by electrophilic quinones. Functionally, also exhibits azoreductase activity. Catalyzes the reductive cleavage of the azo bond in aromatic azo compounds to the corresponding amines. This Caldicellulosiruptor bescii (strain ATCC BAA-1888 / DSM 6725 / KCTC 15123 / Z-1320) (Anaerocellum thermophilum) protein is FMN-dependent NADH:quinone oxidoreductase.